A 326-amino-acid polypeptide reads, in one-letter code: N-acetyl-gamma-glutamyl-phosphate reductase (326 aa).

Residue cysteine 155 is part of the active site.

This sequence belongs to the NAGSA dehydrogenase family. Type 1 subfamily.

The protein localises to the cytoplasm. The enzyme catalyses N-acetyl-L-glutamate 5-semialdehyde + phosphate + NADP(+) = N-acetyl-L-glutamyl 5-phosphate + NADPH + H(+). Its pathway is amino-acid biosynthesis; L-arginine biosynthesis; N(2)-acetyl-L-ornithine from L-glutamate: step 3/4. Its function is as follows. Catalyzes the NADPH-dependent reduction of N-acetyl-5-glutamyl phosphate to yield N-acetyl-L-glutamate 5-semialdehyde. This chain is N-acetyl-gamma-glutamyl-phosphate reductase, found in Shewanella oneidensis (strain ATCC 700550 / JCM 31522 / CIP 106686 / LMG 19005 / NCIMB 14063 / MR-1).